Consider the following 420-residue polypeptide: Methionine aminopeptidase 2 (420 aa).

Residues 1–48 (MSDAIAKDAVNTSSEKEPVSATPELKTSGSPDAAVSSGDKKKKKKKKK) are disordered. Substrate is bound at residue histidine 172. A divalent metal cation contacts are provided by aspartate 192, aspartate 203, and histidine 272. Histidine 280 is a binding site for substrate. 2 residues coordinate a divalent metal cation: glutamate 305 and glutamate 401.

This sequence belongs to the peptidase M24A family. Methionine aminopeptidase eukaryotic type 2 subfamily. Co(2+) serves as cofactor. Zn(2+) is required as a cofactor. Requires Mn(2+) as cofactor. The cofactor is Fe(2+).

It is found in the cytoplasm. The enzyme catalyses Release of N-terminal amino acids, preferentially methionine, from peptides and arylamides.. Functionally, cotranslationally removes the N-terminal methionine from nascent proteins. The N-terminal methionine is often cleaved when the second residue in the primary sequence is small and uncharged (Met-Ala-, Cys, Gly, Pro, Ser, Thr, or Val). In Lachancea thermotolerans (strain ATCC 56472 / CBS 6340 / NRRL Y-8284) (Yeast), this protein is Methionine aminopeptidase 2.